The sequence spans 312 residues: Putative B3 domain-containing protein Os10g0537100 (312 aa).

Residues 35–153 (FEKVVTPSDV…RLFIDFRRRR (119 aa)) constitute a DNA-binding region (TF-B3). Disordered stretches follow at residues 161 to 182 (FPPT…HPPL) and 286 to 312 (LLQL…DLGL). Positions 170 to 180 (HSHHHHQRHHP) are enriched in basic residues. The span at 286–301 (LLQLPSPSSSTSSSTA) shows a compositional bias: low complexity.

It localises to the nucleus. This chain is Putative B3 domain-containing protein Os10g0537100, found in Oryza sativa subsp. japonica (Rice).